Here is a 285-residue protein sequence, read N- to C-terminus: Elongation factor Ts (285 aa).

Residues 82 to 85 (TDFV) are involved in Mg(2+) ion dislocation from EF-Tu.

This sequence belongs to the EF-Ts family.

The protein localises to the cytoplasm. Its function is as follows. Associates with the EF-Tu.GDP complex and induces the exchange of GDP to GTP. It remains bound to the aminoacyl-tRNA.EF-Tu.GTP complex up to the GTP hydrolysis stage on the ribosome. The polypeptide is Elongation factor Ts (Sodalis glossinidius (strain morsitans)).